Reading from the N-terminus, the 367-residue chain is Alanine racemase (367 aa).

The active-site Proton acceptor; specific for D-alanine is the Lys-34. N6-(pyridoxal phosphate)lysine is present on Lys-34. Substrate is bound at residue Arg-131. The active-site Proton acceptor; specific for L-alanine is Tyr-258. Met-306 provides a ligand contact to substrate.

This sequence belongs to the alanine racemase family. Requires pyridoxal 5'-phosphate as cofactor.

The catalysed reaction is L-alanine = D-alanine. The protein operates within amino-acid biosynthesis; D-alanine biosynthesis; D-alanine from L-alanine: step 1/1. Functionally, catalyzes the interconversion of L-alanine and D-alanine. May also act on other amino acids. The chain is Alanine racemase (alr) from Corynebacterium efficiens (strain DSM 44549 / YS-314 / AJ 12310 / JCM 11189 / NBRC 100395).